The sequence spans 226 residues: MGTWILFACLLGTAFAMPLPPHPGHPGYINFSYEKSHSNAINIDRTALVLTPLKWYQSMIRQPYPSYGYESMGGWVHHQVIPVLSQQHPPSHTTLPPHHHIPVGPAQQPVVPQQPLMPVPGHHSMTPNQHHQPNLPPTSQQPFQQPFPTQPVQPQHHQPIQPIQPIQPIQPIQPIQPQSPLHPIQPLPPQQALPPMFSMQPIAPLLPDLPLEAWPATDKTKREEVD.

The signal sequence occupies residues 1–16; sequence MGTWILFACLLGTAFA. Ser32 is modified (phosphoserine). The segment at 86–196 is disordered; it reads QQHPPSHTTL…LPPQQALPPM (111 aa). Composition is skewed to low complexity over residues 88-120 and 137-182; these read HPPS…MPVP and PTSQ…SPLH. Over residues 183 to 192 the composition is skewed to pro residues; that stretch reads PIQPLPPQQA.

This sequence belongs to the amelogenin family.

The protein resides in the secreted. It localises to the extracellular space. It is found in the extracellular matrix. In terms of biological role, plays a role in the biomineralization of teeth. Seems to regulate the formation of crystallites during the secretory stage of tooth enamel development. Thought to play a major role in the structural organization and mineralization of developing enamel. This Cavia porcellus (Guinea pig) protein is Amelogenin (AMEL).